The following is a 262-amino-acid chain: MHGLVVLLVCLAVGSAFAGTIGVSNADPFEREGRIVGGEDTTIRAHPYQVSLQNKKGSHFCGGSLINEDTVVTAAHCLVGKKIAKVFVRLGSTLYNEGGIVVAVRALTYNADYSSKTMENDVGILKLAEKVKETDDIRYIELATETPPTGTTAVVTGWGSKCYFWCMTLPKTLQAVYVNIVDWKTCASDEYKYGEVIYDTMVCAYEKKKDACQGDSGGPLAIGNTLVGIVSWGYACASNLLPGVYSDVPALRKWILNASQTL.

Positions 1–19 are cleaved as a signal peptide; that stretch reads MHGLVVLLVCLAVGSAFAG. The propeptide at 20-34 is activation peptide; sequence TIGVSNADPFEREGR. One can recognise a Peptidase S1 domain in the interval 35 to 260; it reads IVGGEDTTIR…LRKWILNASQ (226 aa). A disulfide bond links C61 and C77. Active-site charge relay system residues include H76 and D121. 2 cysteine pairs are disulfide-bonded: C186–C203 and C212–C236. Catalysis depends on S216, which acts as the Charge relay system.

This sequence belongs to the peptidase S1 family.

The protein localises to the secreted. It is found in the extracellular space. The catalysed reaction is Preferential cleavage: Arg-|-Xaa, Lys-|-Xaa.. The sequence is that of Trypsin theta (thetaTry) from Drosophila erecta (Fruit fly).